Here is a 421-residue protein sequence, read N- to C-terminus: 3-phosphoshikimate 1-carboxyvinyltransferase (421 aa).

Residues lysine 19, serine 20, and arginine 24 each contribute to the 3-phosphoshikimate site. Lysine 19 is a phosphoenolpyruvate binding site. Positions 88 and 116 each coordinate phosphoenolpyruvate. Serine 160, glutamine 162, aspartate 307, and lysine 334 together coordinate 3-phosphoshikimate. Residue glutamine 162 participates in phosphoenolpyruvate binding. The Proton acceptor role is filled by aspartate 307. Residues arginine 338 and arginine 380 each coordinate phosphoenolpyruvate.

The protein belongs to the EPSP synthase family. In terms of assembly, monomer.

The protein localises to the cytoplasm. It catalyses the reaction 3-phosphoshikimate + phosphoenolpyruvate = 5-O-(1-carboxyvinyl)-3-phosphoshikimate + phosphate. It participates in metabolic intermediate biosynthesis; chorismate biosynthesis; chorismate from D-erythrose 4-phosphate and phosphoenolpyruvate: step 6/7. Catalyzes the transfer of the enolpyruvyl moiety of phosphoenolpyruvate (PEP) to the 5-hydroxyl of shikimate-3-phosphate (S3P) to produce enolpyruvyl shikimate-3-phosphate and inorganic phosphate. The protein is 3-phosphoshikimate 1-carboxyvinyltransferase of Thermotoga sp. (strain RQ2).